A 163-amino-acid chain; its full sequence is Phosphopantetheine adenylyltransferase (163 aa).

Threonine 11 serves as a coordination point for substrate. Residues 11–12 (TF) and histidine 19 each bind ATP. Substrate contacts are provided by lysine 43, leucine 75, and arginine 89. ATP contacts are provided by residues 90–92 (GLR), glutamate 100, and 125–131 (YSFISST).

This sequence belongs to the bacterial CoaD family. In terms of assembly, homohexamer. The cofactor is Mg(2+).

The protein localises to the cytoplasm. The catalysed reaction is (R)-4'-phosphopantetheine + ATP + H(+) = 3'-dephospho-CoA + diphosphate. The protein operates within cofactor biosynthesis; coenzyme A biosynthesis; CoA from (R)-pantothenate: step 4/5. In terms of biological role, reversibly transfers an adenylyl group from ATP to 4'-phosphopantetheine, yielding dephospho-CoA (dPCoA) and pyrophosphate. The sequence is that of Phosphopantetheine adenylyltransferase from Acinetobacter baumannii (strain SDF).